A 100-amino-acid chain; its full sequence is uncharacterized protein (100 aa).

This is an uncharacterized protein from Mycoplasma pneumoniae (strain ATCC 29342 / M129 / Subtype 1) (Mycoplasmoides pneumoniae).